The following is an 804-amino-acid chain: Leucine--tRNA ligase (804 aa).

Positions 39–50 (PFPSGKGLHVGH) match the 'HIGH' region motif. A 'KMSKS' region motif is present at residues 573–577 (KMSKS). Position 576 (lysine 576) interacts with ATP.

This sequence belongs to the class-I aminoacyl-tRNA synthetase family.

It localises to the cytoplasm. It catalyses the reaction tRNA(Leu) + L-leucine + ATP = L-leucyl-tRNA(Leu) + AMP + diphosphate. This is Leucine--tRNA ligase from Lactobacillus acidophilus (strain ATCC 700396 / NCK56 / N2 / NCFM).